A 372-amino-acid chain; its full sequence is Envelope phospholipase OPG057 (372 aa).

Residues 153–156 (YPPL) carry the YPPL motif. Residues Cys-185 and Cys-186 are each lipidated (S-palmitoyl cysteine; by host). The region spanning 307-334 (FTIQNNTKLLIVDDEYVHITSANFDGTH) is the PLD phosphodiesterase domain.

This sequence belongs to the orthopoxvirus OPG057 family. Interacts with protein OPG190. Post-translationally, palmitoylated. Attachment of the palmitate moiety is essential for correct intracellular targeting and protein function.

It is found in the virion membrane. The protein localises to the host Golgi apparatus. Its subcellular location is the host trans-Golgi network. The protein resides in the host endoplasmic reticulum membrane. The catalysed reaction is a 1,2-diacyl-sn-glycero-3-phosphocholine + H2O = a 1,2-diacyl-sn-glycero-3-phosphate + choline + H(+). In terms of biological role, major envelope protein that plays a role in the biogenesis of the viral double membrane and in egress of virus from the host cell. Produces the wrapped form of virus that is required for cell-to-cell spread. Acts as a lipase with broad specificity including phospholipase C, phospholipase A, and triacylglycerol lipase activities. The sequence is that of Envelope phospholipase OPG057 (OPG057) from Vaccinia virus (strain Copenhagen) (VACV).